Consider the following 796-residue polypeptide: Kinesin-like protein KIF3C (796 aa).

In terms of domain architecture, Kinesin motor spans 10–367 (ALKVVARCRP…LRFANRAKNI (358 aa)). 97–104 (GQTGTGKT) is a binding site for ATP. 3 disordered regions span residues 251-292 (ERQN…PKEA), 397-421 (EKKGMLGKRPRRKSSRRKKAVSAPA), and 754-796 (PSTS…VDHD). Residues 270–284 (AGGGGGGGGTSGSGS) show a composition bias toward gly residues. Residues 378–632 (KDTLLREFQE…NEQTRELKLK (255 aa)) adopt a coiled-coil conformation. Residues 401-416 (MLGKRPRRKSSRRKKA) are compositionally biased toward basic residues. A globular region spans residues 633 to 793 (YLIIENFIPP…SAPLHPATVV (161 aa)).

This sequence belongs to the TRAFAC class myosin-kinesin ATPase superfamily. Kinesin family. Kinesin II subfamily. In terms of assembly, heterodimer of KIF3A and KIF3C.

Its subcellular location is the cytoplasm. It is found in the cytoskeleton. In terms of biological role, microtubule-based anterograde translocator for membranous organelles. The protein is Kinesin-like protein KIF3C (Kif3c) of Rattus norvegicus (Rat).